A 395-amino-acid chain; its full sequence is Elongation factor Tu (395 aa).

The region spanning 10 to 204 (KPHVNIGTIG…AVDSYIPTPE (195 aa)) is the tr-type G domain. The segment at 19-26 (GHVDHGKT) is G1. A GTP-binding site is contributed by 19-26 (GHVDHGKT). Threonine 26 is a binding site for Mg(2+). Positions 60-64 (GITIS) are G2. The segment at 81–84 (DCPG) is G3. GTP contacts are provided by residues 81 to 85 (DCPGH) and 136 to 139 (NKCD). Positions 136–139 (NKCD) are G4. The segment at 174-176 (SAL) is G5.

The protein belongs to the TRAFAC class translation factor GTPase superfamily. Classic translation factor GTPase family. EF-Tu/EF-1A subfamily. As to quaternary structure, monomer.

It localises to the cytoplasm. The catalysed reaction is GTP + H2O = GDP + phosphate + H(+). Functionally, GTP hydrolase that promotes the GTP-dependent binding of aminoacyl-tRNA to the A-site of ribosomes during protein biosynthesis. The polypeptide is Elongation factor Tu (Listeria monocytogenes serotype 4b (strain CLIP80459)).